Reading from the N-terminus, the 432-residue chain is tRNA(Ile)-lysidine synthase (432 aa).

ATP is bound at residue 20–25; that stretch reads SGGLDS.

Belongs to the tRNA(Ile)-lysidine synthase family.

Its subcellular location is the cytoplasm. The enzyme catalyses cytidine(34) in tRNA(Ile2) + L-lysine + ATP = lysidine(34) in tRNA(Ile2) + AMP + diphosphate + H(+). Functionally, ligates lysine onto the cytidine present at position 34 of the AUA codon-specific tRNA(Ile) that contains the anticodon CAU, in an ATP-dependent manner. Cytidine is converted to lysidine, thus changing the amino acid specificity of the tRNA from methionine to isoleucine. This Shigella flexneri protein is tRNA(Ile)-lysidine synthase.